The following is a 315-amino-acid chain: Indoleacetate decarboxylase activating enzyme (315 aa).

A Radical SAM core domain is found at 21-311; sequence HDGPGIRTNV…ADIIEAHGVK (291 aa). [4Fe-4S] cluster contacts are provided by cysteine 35, cysteine 39, cysteine 42, cysteine 61, cysteine 64, cysteine 67, cysteine 71, cysteine 98, cysteine 101, cysteine 106, and cysteine 110. 4Fe-4S ferredoxin-type domains lie at 52-81 and 89-120; these read PQLL…AITD and GYVH…IAGE. S-adenosyl-L-methionine-binding positions include glycine 149, 198–200, and histidine 271; that span reads DCK.

It belongs to the organic radical-activating enzymes family. [4Fe-4S] cluster serves as cofactor.

It carries out the reaction glycyl-[protein] + reduced [flavodoxin] + S-adenosyl-L-methionine = glycin-2-yl radical-[protein] + semiquinone [flavodoxin] + 5'-deoxyadenosine + L-methionine + H(+). In terms of biological role, catalyzes activation of the indoleacetate decarboxylase OsIAD under anaerobic conditions by generation of an organic free radical on a glycine residue, via a homolytic cleavage of S-adenosyl-L-methionine (SAM). The chain is Indoleacetate decarboxylase activating enzyme from Tractidigestivibacter scatoligenes (Olsenella scatoligenes).